Consider the following 379-residue polypeptide: Tryptophan 2,3-dioxygenase (379 aa).

Substrate-binding positions include 57–61 (FIITH) and Arg-128. His-312 contributes to the heme binding site. Thr-327 serves as a coordination point for substrate.

This sequence belongs to the tryptophan 2,3-dioxygenase family. In terms of assembly, homotetramer. Dimer of dimers. It depends on heme as a cofactor.

The enzyme catalyses L-tryptophan + O2 = N-formyl-L-kynurenine. The protein operates within amino-acid degradation; L-tryptophan degradation via kynurenine pathway; L-kynurenine from L-tryptophan: step 1/2. Its pathway is pigment biosynthesis; ommochrome biosynthesis. Its function is as follows. Heme-dependent dioxygenase that catalyzes the oxidative cleavage of the L-tryptophan (L-Trp) pyrrole ring and converts L-tryptophan to N-formyl-L-kynurenine. Catalyzes the oxidative cleavage of the indole moiety. This is Tryptophan 2,3-dioxygenase from Drosophila erecta (Fruit fly).